Reading from the N-terminus, the 1110-residue chain is Coiled-coil domain-containing protein 150 (1110 aa).

Coiled-coil stretches lie at residues 122-250 (LENL…TSAS), 288-313 (QDLLAQEQRKNEDLGMTISQLKSDLN), 413-695 (AAHA…KEDN), and 728-1048 (SEIA…EAHR).

This Mus musculus (Mouse) protein is Coiled-coil domain-containing protein 150 (Ccdc150).